Here is a 325-residue protein sequence, read N- to C-terminus: Protein FAM50B (325 aa).

An N-acetylalanine modification is found at Ala-2. Disordered stretches follow at residues 92–111 and 137–160; these read QHLE…EQRR and RRAG…DREE.

This sequence belongs to the FAM50 family. Widely expressed. Mostly abundant in testis and adult and fetal brain.

The polypeptide is Protein FAM50B (FAM50B) (Homo sapiens (Human)).